We begin with the raw amino-acid sequence, 275 residues long: Adenylate kinase (275 aa).

54 to 59 provides a ligand contact to ATP; it reads GAGKGT. Residues 74–103 form an NMP region; it reads ATGDMLRSQVAKKTPLGREAKKIMDQGGLV. Residues threonine 75, arginine 80, 101 to 103, 130 to 133, and glutamine 137 contribute to the AMP site; these read GLV and GFPR. Positions 171-208 are LID; the sequence is GRLVHPASGRSYHRVFNPPKAEMKDDITGEPLVSRSDD. ATP-binding positions include arginine 172 and 181 to 182; that span reads SY. AMP-binding residues include arginine 205 and arginine 216. Residue glutamine 244 participates in ATP binding.

It belongs to the adenylate kinase family. AK2 subfamily. Monomer.

It localises to the cytoplasm. Its subcellular location is the cytosol. It is found in the mitochondrion intermembrane space. The catalysed reaction is AMP + ATP = 2 ADP. Its function is as follows. Catalyzes the reversible transfer of the terminal phosphate group between ATP and AMP. Plays an important role in cellular energy homeostasis and in adenine nucleotide metabolism. Adenylate kinase activity is critical for regulation of the phosphate utilization and the AMP de novo biosynthesis pathways. This Sclerotinia sclerotiorum (strain ATCC 18683 / 1980 / Ss-1) (White mold) protein is Adenylate kinase (adk1).